Here is a 123-residue protein sequence, read N- to C-terminus: Small ribosomal subunit protein uS12 (123 aa).

Position 89 is a 3-methylthioaspartic acid (Asp-89).

Belongs to the universal ribosomal protein uS12 family. Part of the 30S ribosomal subunit. Contacts proteins S8 and S17. May interact with IF1 in the 30S initiation complex.

With S4 and S5 plays an important role in translational accuracy. Functionally, interacts with and stabilizes bases of the 16S rRNA that are involved in tRNA selection in the A site and with the mRNA backbone. Located at the interface of the 30S and 50S subunits, it traverses the body of the 30S subunit contacting proteins on the other side and probably holding the rRNA structure together. The combined cluster of proteins S8, S12 and S17 appears to hold together the shoulder and platform of the 30S subunit. In Sinorhizobium medicae (strain WSM419) (Ensifer medicae), this protein is Small ribosomal subunit protein uS12.